A 383-amino-acid polypeptide reads, in one-letter code: Lipid-A-disaccharide synthase (383 aa).

The protein belongs to the LpxB family.

It catalyses the reaction 2-N,3-O-bis[(3R)-3-hydroxytetradecanoyl]-alpha-D-glucosaminyl 1-phosphate + UDP-2-N,3-O-bis[(3R)-3-hydroxytetradecanoyl]-alpha-D-glucosamine = lipid A disaccharide (E. coli) + UDP + H(+). The enzyme catalyses a lipid X + a UDP-2-N,3-O-bis[(3R)-3-hydroxyacyl]-alpha-D-glucosamine = a lipid A disaccharide + UDP + H(+). The protein operates within glycolipid biosynthesis; lipid IV(A) biosynthesis; lipid IV(A) from (3R)-3-hydroxytetradecanoyl-[acyl-carrier-protein] and UDP-N-acetyl-alpha-D-glucosamine: step 5/6. Functionally, condensation of UDP-2,3-diacylglucosamine and 2,3-diacylglucosamine-1-phosphate to form lipid A disaccharide, a precursor of lipid A, a phosphorylated glycolipid that anchors the lipopolysaccharide to the outer membrane of the cell. The sequence is that of Lipid-A-disaccharide synthase from Pectobacterium atrosepticum (strain SCRI 1043 / ATCC BAA-672) (Erwinia carotovora subsp. atroseptica).